Reading from the N-terminus, the 459-residue chain is Bifunctional protein GlmU (459 aa).

The pyrophosphorylase stretch occupies residues 1–230 (MVKRYAVILA…FDETIGINDR (230 aa)). Residues 9–12 (LAAG), Lys23, Gln73, and 78–79 (GT) contribute to the UDP-N-acetyl-alpha-D-glucosamine site. Position 103 (Asp103) interacts with Mg(2+). Positions 140, 155, 170, and 228 each coordinate UDP-N-acetyl-alpha-D-glucosamine. Mg(2+) is bound at residue Asn228. A linker region spans residues 231–251 (IALAEAERIMRDRICRQHMKN). Positions 252–459 (GVTIIDPACT…VDRLRGKKKS (208 aa)) are N-acetyltransferase. Residues Arg333 and Lys351 each coordinate UDP-N-acetyl-alpha-D-glucosamine. The Proton acceptor role is filled by His363. Residues Tyr366 and Asn377 each contribute to the UDP-N-acetyl-alpha-D-glucosamine site. Acetyl-CoA is bound by residues 386-387 (NY), Ala423, and Arg440.

The protein in the N-terminal section; belongs to the N-acetylglucosamine-1-phosphate uridyltransferase family. It in the C-terminal section; belongs to the transferase hexapeptide repeat family. As to quaternary structure, homotrimer. Mg(2+) serves as cofactor.

Its subcellular location is the cytoplasm. It catalyses the reaction alpha-D-glucosamine 1-phosphate + acetyl-CoA = N-acetyl-alpha-D-glucosamine 1-phosphate + CoA + H(+). The catalysed reaction is N-acetyl-alpha-D-glucosamine 1-phosphate + UTP + H(+) = UDP-N-acetyl-alpha-D-glucosamine + diphosphate. Its pathway is nucleotide-sugar biosynthesis; UDP-N-acetyl-alpha-D-glucosamine biosynthesis; N-acetyl-alpha-D-glucosamine 1-phosphate from alpha-D-glucosamine 6-phosphate (route II): step 2/2. It functions in the pathway nucleotide-sugar biosynthesis; UDP-N-acetyl-alpha-D-glucosamine biosynthesis; UDP-N-acetyl-alpha-D-glucosamine from N-acetyl-alpha-D-glucosamine 1-phosphate: step 1/1. It participates in bacterial outer membrane biogenesis; LPS lipid A biosynthesis. In terms of biological role, catalyzes the last two sequential reactions in the de novo biosynthetic pathway for UDP-N-acetylglucosamine (UDP-GlcNAc). The C-terminal domain catalyzes the transfer of acetyl group from acetyl coenzyme A to glucosamine-1-phosphate (GlcN-1-P) to produce N-acetylglucosamine-1-phosphate (GlcNAc-1-P), which is converted into UDP-GlcNAc by the transfer of uridine 5-monophosphate (from uridine 5-triphosphate), a reaction catalyzed by the N-terminal domain. The polypeptide is Bifunctional protein GlmU (Geobacillus thermodenitrificans (strain NG80-2)).